The primary structure comprises 542 residues: Chaperonin GroEL 1 (542 aa).

ATP contacts are provided by residues 30–33 (TLGP), K51, 87–91 (DGTTT), G415, and D496.

Belongs to the chaperonin (HSP60) family. As to quaternary structure, forms a cylinder of 14 subunits composed of two heptameric rings stacked back-to-back. Interacts with the co-chaperonin GroES.

The protein localises to the cytoplasm. The enzyme catalyses ATP + H2O + a folded polypeptide = ADP + phosphate + an unfolded polypeptide.. Its function is as follows. Together with its co-chaperonin GroES, plays an essential role in assisting protein folding. The GroEL-GroES system forms a nano-cage that allows encapsulation of the non-native substrate proteins and provides a physical environment optimized to promote and accelerate protein folding. This is Chaperonin GroEL 1 from Sinorhizobium fredii (strain NBRC 101917 / NGR234).